The sequence spans 82 residues: Delta-actitoxin-Aeq2b 1 (82 aa).

The N-terminal stretch at 1–19 (MNRLMILVFAAVILALASA) is a signal peptide. The propeptide occupies 20-26 (DEDVDIA). Disulfide bonds link Cys32/Cys79, Cys34/Cys69, and Cys62/Cys80.

This sequence belongs to the sea anemone sodium channel inhibitory toxin family. Type I subfamily.

The protein localises to the secreted. Its subcellular location is the nematocyst. Binds specifically to voltage-gated sodium channels (Nav), thereby delaying their inactivation during signal transduction. Causes death to crabs. This is Delta-actitoxin-Aeq2b 1 from Actinia equina (Beadlet anemone).